We begin with the raw amino-acid sequence, 273 residues long: ATP synthase subunit a (273 aa).

A run of 7 helical transmembrane segments spans residues 41–61 (ILNIDSIFFTLLLGIIFLLIF), 101–121 (LIAPLALTIFIWIFLMNLMDL), 122–142 (LAVDMLPYIAMYILHIPALRV), 143–163 (VPSADINITLSLALGVFILII), 183–203 (PFNHLIFIPLNFILESVSLLS), 221–241 (LVFILIAGLLPWWSQWIISVP), and 247–267 (IIVITLQAFIFMVLTVVYIAM).

The protein belongs to the ATPase A chain family. In terms of assembly, F-type ATPases have 2 components, CF(1) - the catalytic core - and CF(0) - the membrane proton channel. CF(1) has five subunits: alpha(3), beta(3), gamma(1), delta(1), epsilon(1). CF(0) has three main subunits: a(1), b(2) and c(9-12). The alpha and beta chains form an alternating ring which encloses part of the gamma chain. CF(1) is attached to CF(0) by a central stalk formed by the gamma and epsilon chains, while a peripheral stalk is formed by the delta and b chains.

Its subcellular location is the cell membrane. Its function is as follows. Key component of the proton channel; it plays a direct role in the translocation of protons across the membrane. This is ATP synthase subunit a from Baumannia cicadellinicola subsp. Homalodisca coagulata.